Reading from the N-terminus, the 147-residue chain is Sentan (147 aa).

The disordered stretch occupies residues methionine 1–arginine 32. Residues threonine 8–glycine 17 show a composition bias toward basic and acidic residues.

The protein belongs to the S-100 family.

The protein resides in the cell projection. It is found in the cilium. May be a component of the linker structure that bridges the ciliary membrane and peripheral singlet microtubules. In Homo sapiens (Human), this protein is Sentan (SNTN).